A 582-amino-acid polypeptide reads, in one-letter code: tRNA(Ile)-lysidine synthase (582 aa).

ATP is bound at residue 46–51; sequence SGGADS. Residues 402 to 525 enclose the CMP/dCMP-type deaminase domain; it reads DPLHAAMGEA…DLLADHWGWR (124 aa). The interval 548–582 is disordered; it reads VRRRSADTPQTPNAETPAPRSSRSTSASGKPTMLE. The span at 563-575 shows a compositional bias: low complexity; the sequence is TPAPRSSRSTSAS.

Belongs to the tRNA(Ile)-lysidine synthase family.

It localises to the cytoplasm. It catalyses the reaction cytidine(34) in tRNA(Ile2) + L-lysine + ATP = lysidine(34) in tRNA(Ile2) + AMP + diphosphate + H(+). Functionally, ligates lysine onto the cytidine present at position 34 of the AUA codon-specific tRNA(Ile) that contains the anticodon CAU, in an ATP-dependent manner. Cytidine is converted to lysidine, thus changing the amino acid specificity of the tRNA from methionine to isoleucine. The protein is tRNA(Ile)-lysidine synthase of Deinococcus radiodurans (strain ATCC 13939 / DSM 20539 / JCM 16871 / CCUG 27074 / LMG 4051 / NBRC 15346 / NCIMB 9279 / VKM B-1422 / R1).